Here is a 37-residue protein sequence, read N- to C-terminus: Large ribosomal subunit protein bL36c (37 aa).

This sequence belongs to the bacterial ribosomal protein bL36 family.

It localises to the plastid. Its subcellular location is the chloroplast. The polypeptide is Large ribosomal subunit protein bL36c (Psilotum nudum (Whisk fern)).